Reading from the N-terminus, the 358-residue chain is UDP-N-acetylglucosamine--N-acetylmuramyl-(pentapeptide) pyrophosphoryl-undecaprenol N-acetylglucosamine transferase (358 aa).

UDP-N-acetyl-alpha-D-glucosamine is bound by residues 10–12 (TGG), N124, S196, and Q293.

The protein belongs to the glycosyltransferase 28 family. MurG subfamily.

The protein resides in the cell membrane. It carries out the reaction di-trans,octa-cis-undecaprenyl diphospho-N-acetyl-alpha-D-muramoyl-L-alanyl-D-glutamyl-meso-2,6-diaminopimeloyl-D-alanyl-D-alanine + UDP-N-acetyl-alpha-D-glucosamine = di-trans,octa-cis-undecaprenyl diphospho-[N-acetyl-alpha-D-glucosaminyl-(1-&gt;4)]-N-acetyl-alpha-D-muramoyl-L-alanyl-D-glutamyl-meso-2,6-diaminopimeloyl-D-alanyl-D-alanine + UDP + H(+). The protein operates within cell wall biogenesis; peptidoglycan biosynthesis. In terms of biological role, cell wall formation. Catalyzes the transfer of a GlcNAc subunit on undecaprenyl-pyrophosphoryl-MurNAc-pentapeptide (lipid intermediate I) to form undecaprenyl-pyrophosphoryl-MurNAc-(pentapeptide)GlcNAc (lipid intermediate II). The chain is UDP-N-acetylglucosamine--N-acetylmuramyl-(pentapeptide) pyrophosphoryl-undecaprenol N-acetylglucosamine transferase from Exiguobacterium sp. (strain ATCC BAA-1283 / AT1b).